Here is a 761-residue protein sequence, read N- to C-terminus: Xaa-Pro dipeptidyl-peptidase (761 aa).

Residues Ser-347, Asp-467, and His-497 each act as charge relay system in the active site.

Belongs to the peptidase S15 family. In terms of assembly, homodimer.

The protein resides in the cytoplasm. It catalyses the reaction Hydrolyzes Xaa-Pro-|- bonds to release unblocked, N-terminal dipeptides from substrates including Ala-Pro-|-p-nitroanilide and (sequentially) Tyr-Pro-|-Phe-Pro-|-Gly-Pro-|-Ile.. Its function is as follows. Removes N-terminal dipeptides sequentially from polypeptides having unsubstituted N-termini provided that the penultimate residue is proline. The chain is Xaa-Pro dipeptidyl-peptidase from Streptococcus agalactiae serotype Ia (strain ATCC 27591 / A909 / CDC SS700).